The sequence spans 504 residues: Maturase K (504 aa).

The protein belongs to the intron maturase 2 family. MatK subfamily.

It is found in the plastid. The protein localises to the chloroplast. In terms of biological role, usually encoded in the trnK tRNA gene intron. Probably assists in splicing its own and other chloroplast group II introns. In Barbarea vulgaris (Yellow rocket), this protein is Maturase K.